Consider the following 443-residue polypeptide: Methyl-coenzyme M reductase subunit beta (443 aa).

Tyrosine 367 serves as a coordination point for coenzyme M. Coenzyme B is bound at residue glycine 369.

The protein belongs to the methyl-coenzyme M reductase beta subunit family. In terms of assembly, MCR is a hexamer of two alpha, two beta, and two gamma chains, forming a dimer of heterotrimers. Coenzyme F430 serves as cofactor.

The protein resides in the cytoplasm. It carries out the reaction coenzyme B + methyl-coenzyme M = methane + coenzyme M-coenzyme B heterodisulfide. Its pathway is one-carbon metabolism; methyl-coenzyme M reduction; methane from methyl-coenzyme M: step 1/1. Functionally, component of the methyl-coenzyme M reductase (MCR) I that catalyzes the reductive cleavage of methyl-coenzyme M (CoM-S-CH3 or 2-(methylthio)ethanesulfonate) using coenzyme B (CoB or 7-mercaptoheptanoylthreonine phosphate) as reductant which results in the production of methane and the mixed heterodisulfide of CoB and CoM (CoM-S-S-CoB). This is the final step in methanogenesis. In Methanococcus vannielii, this protein is Methyl-coenzyme M reductase subunit beta (mcrB).